A 448-amino-acid polypeptide reads, in one-letter code: N-succinylarginine dihydrolase (448 aa).

Substrate contacts are provided by residues 19–28 (GGLSYGNVAS), Asn110, and 137–138 (HR). Residue Glu174 is part of the active site. Arg214 provides a ligand contact to substrate. Residue His250 is part of the active site. Substrate is bound by residues Asp252 and Asn365. The active-site Nucleophile is the Cys371.

It belongs to the succinylarginine dihydrolase family. Homodimer.

The enzyme catalyses N(2)-succinyl-L-arginine + 2 H2O + 2 H(+) = N(2)-succinyl-L-ornithine + 2 NH4(+) + CO2. It participates in amino-acid degradation; L-arginine degradation via AST pathway; L-glutamate and succinate from L-arginine: step 2/5. Functionally, catalyzes the hydrolysis of N(2)-succinylarginine into N(2)-succinylornithine, ammonia and CO(2). This chain is N-succinylarginine dihydrolase, found in Pseudomonas paraeruginosa (strain DSM 24068 / PA7) (Pseudomonas aeruginosa (strain PA7)).